A 303-amino-acid chain; its full sequence is Nucleotide-binding protein Acry_0446 (303 aa).

10–17 contributes to the ATP binding site; the sequence is GLSGAGRN. 54–57 lines the GTP pocket; that stretch reads DART.

The protein belongs to the RapZ-like family.

In terms of biological role, displays ATPase and GTPase activities. The chain is Nucleotide-binding protein Acry_0446 from Acidiphilium cryptum (strain JF-5).